Reading from the N-terminus, the 520-residue chain is Dual specificity tyrosine-phosphorylation-regulated kinase 4 (520 aa).

Residues 1–32 are disordered; the sequence is MPASELKASEIPFHPSIKTQDPKAEEKSPKKQ. The short motif at 19–37 is the Bipartite nuclear localization signal element; it reads TQDPKAEEKSPKKQKVTLT. A compositionally biased stretch (basic and acidic residues) spans 20-29; that stretch reads QDPKAEEKSP. The Protein kinase domain occupies 104–400; sequence YEVLETIGKG…PDQALKHAWI (297 aa). ATP is bound by residues 110 to 118, Lys-133, and 183 to 186; these read IGKGSFGQV and FELL. The active-site Proton acceptor is Asp-230. Tyr-264 carries the phosphotyrosine; by autocatalysis modification. The tract at residues 404-467 is disordered; sequence RNLKPQPRPQ…KHVQHSGDQQ (64 aa). A compositionally biased stretch (basic and acidic residues) spans 439–457; it reads RKADEITKETTEKTKDSPT.

Belongs to the protein kinase superfamily. CMGC Ser/Thr protein kinase family. MNB/DYRK subfamily. Mg(2+) serves as cofactor. Autophosphorylation on Tyr-264 in the activation loop is required for kinase activity.

It localises to the cytoplasm. The protein localises to the nucleus. It catalyses the reaction L-seryl-[protein] + ATP = O-phospho-L-seryl-[protein] + ADP + H(+). The catalysed reaction is L-threonyl-[protein] + ATP = O-phospho-L-threonyl-[protein] + ADP + H(+). The enzyme catalyses L-tyrosyl-[protein] + ATP = O-phospho-L-tyrosyl-[protein] + ADP + H(+). In terms of biological role, possible non-essential role in spermiogenesis. The polypeptide is Dual specificity tyrosine-phosphorylation-regulated kinase 4 (DYRK4) (Homo sapiens (Human)).